Here is a 507-residue protein sequence, read N- to C-terminus: Tryptophan aminotransferase-related protein 2 (507 aa).

The segment at 91–135 (PPPHHHHHDAGLATRSSDAAVHRRARTASSMAPSTGKPAVTTDSV) is disordered. Pyridoxal 5'-phosphate is bound by residues Tyr169, 211–212 (ST), Asn282, 304–307 (DLAY), 327–330 (TVSK), and Arg338. N6-(pyridoxal phosphate)lysine is present on Lys330.

This sequence belongs to the alliinase family. Requires pyridoxal 5'-phosphate as cofactor. Widely expressed.

The catalysed reaction is L-tryptophan + 2-oxoglutarate = indole-3-pyruvate + L-glutamate. It functions in the pathway plant hormone metabolism; auxin biosynthesis. In terms of biological role, probable tryptophan aminotransferase involved in auxin (IAA) biosynthesis. Required for auxin production to initiate multiple change in growth in response to environmental and developmental cues. Functions upstream of YUCCA1 in auxin biosynthesis. Required for polar auxin transport. The protein is Tryptophan aminotransferase-related protein 2 of Oryza sativa subsp. japonica (Rice).